A 231-amino-acid chain; its full sequence is Sensory transduction protein BceR (231 aa).

The region spanning 3–116 (KIMLIEDDHT…VLVAKIQAIL (114 aa)) is the Response regulatory domain. Asp52 is modified (4-aspartylphosphate). The ompR/PhoB-type DNA-binding region spans 127 to 225 (TQLKTWCGAT…KVGQGYMAKE (99 aa)).

In terms of processing, phosphorylated by BceS.

The protein localises to the cytoplasm. In terms of biological role, member of the two-component regulatory system BceS/BceR involved in the regulation of bacitracin resistance. When activated by BceS, binds to the upstream region of the bceAB promoter and up-regulates the expression of these two genes. This Halalkalibacterium halodurans (strain ATCC BAA-125 / DSM 18197 / FERM 7344 / JCM 9153 / C-125) (Bacillus halodurans) protein is Sensory transduction protein BceR (bceR).